The following is an 89-amino-acid chain: MTEKLNEIVVRKTKNVEDHVLDVIVLFNQGIDEVILKGTGREISKAVDVYNSLKDRLGDGVQLVNVQTGSEVRDRRRISYILLRLKRVY.

K12 is subject to N6-acetyllysine. Zn(2+)-binding residues include K14, D18, and D22.

Belongs to the histone-like Alba family. Forms homodimers and homotetramers. Homodimer at pH below 6.0. Forms homotetramers and higher order homooligomers at near the growth temperature of 80 degrees Celsius and pH 7.0. Interacts with Alba 1; heterodimers lack cooperative DNA-binding behavior and result in more compact chromatin structures compared to Alba 1 homodimers. Acetylated. Acetylation at Lys-12 decreases DNA-binding affinity.

The protein resides in the cytoplasm. It localises to the chromosome. Its function is as follows. Binds single-stranded DNA, RNA and double-stranded DNA. Involved in DNA compaction. This Saccharolobus solfataricus (strain ATCC 35092 / DSM 1617 / JCM 11322 / P2) (Sulfolobus solfataricus) protein is DNA/RNA-binding protein Alba 2.